Here is a 299-residue protein sequence, read N- to C-terminus: Pentalenolactone F synthase (299 aa).

Residues histidine 105 and aspartate 107 each contribute to the Fe cation site. 2-oxoglutarate is bound by residues threonine 133 and tryptophan 251. Histidine 266 is a Fe cation binding site. Arginine 277 is a binding site for 2-oxoglutarate.

It belongs to the TfdA dioxygenase family. Requires Fe(2+) as cofactor.

It carries out the reaction pentalenolactone D + 2 2-oxoglutarate + 2 O2 = pentalenolactone F + 2 succinate + 2 CO2 + H2O. Its pathway is antibiotic biosynthesis; pentalenolactone biosynthesis. Its activity is regulated as follows. Activated by ascorbate. Catalyzes the Fe(2+) and alpha-ketoglutarate-dependent oxidation of pentalenolactone D to pentalenolactone F in the biosynthesis of pentalenolactone antibiotic. Also able to catalyze the oxidation of pentalenolactone D to pentalenolactone E. In Streptomyces arenae, this protein is Pentalenolactone F synthase (pntD).